Here is a 450-residue protein sequence, read N- to C-terminus: Tubulin alpha-3 chain (450 aa).

Residue Gln11 coordinates GTP. Lys40 is subject to N6-acetyllysine. Positions 71, 140, 144, 145, 179, 206, and 228 each coordinate GTP. Glu71 lines the Mg(2+) pocket. Glu254 is an active-site residue.

The protein belongs to the tubulin family. Dimer of alpha and beta chains. A typical microtubule is a hollow water-filled tube with an outer diameter of 25 nm and an inner diameter of 15 nM. Alpha-beta heterodimers associate head-to-tail to form protofilaments running lengthwise along the microtubule wall with the beta-tubulin subunit facing the microtubule plus end conferring a structural polarity. Microtubules usually have 13 protofilaments but different protofilament numbers can be found in some organisms and specialized cells. Mg(2+) serves as cofactor. Post-translationally, undergoes a tyrosination/detyrosination cycle, the cyclic removal and re-addition of a C-terminal tyrosine residue by the enzymes tubulin tyrosine carboxypeptidase (TTCP) and tubulin tyrosine ligase (TTL), respectively. Acetylation of alpha chains at Lys-40 stabilizes microtubules and affects affinity and processivity of microtubule motors. This modification has a role in multiple cellular functions, ranging from cell motility, cell cycle progression or cell differentiation to intracellular trafficking and signaling. During the early stages of oogenesis lky/Alpha-tubulin N-acetyltransferase 2 is the main acetyltransferase responsible for Lys-40 acetylation in germline cells while Atat/alpha-tubulin N-acetyltransferase 1 is the main acetyltransferase responsible for Lys-40 acetylation in somatic cells.

It localises to the cytoplasm. The protein localises to the cytoskeleton. It carries out the reaction GTP + H2O = GDP + phosphate + H(+). Tubulin is the major constituent of microtubules, a cylinder consisting of laterally associated linear protofilaments composed of alpha- and beta-tubulin heterodimers. Microtubules grow by the addition of GTP-tubulin dimers to the microtubule end, where a stabilizing cap forms. Below the cap, tubulin dimers are in GDP-bound state, owing to GTPase activity of alpha-tubulin. The sequence is that of Tubulin alpha-3 chain (alphaTub84D) from Drosophila melanogaster (Fruit fly).